The chain runs to 339 residues: Heat-inducible transcription repressor HrcA (339 aa).

It belongs to the HrcA family.

In terms of biological role, negative regulator of class I heat shock genes (grpE-dnaK-dnaJ and groELS operons). Prevents heat-shock induction of these operons. The chain is Heat-inducible transcription repressor HrcA from Nitrosospira multiformis (strain ATCC 25196 / NCIMB 11849 / C 71).